Here is an 80-residue protein sequence, read N- to C-terminus: Pigment-dispersing hormone type 2 (80 aa).

An N-terminal signal peptide occupies residues 1–23 (MARCFVVLAFLALAAMSLQVATA). Alanine amide is present on A77.

It belongs to the arthropod PDH family. As to expression, eyestalk.

The protein resides in the secreted. Its function is as follows. The pigment-dispersing hormone causes the migration of the distal retinal pigment into the proximal end of the pigment chromatophore cells and thus decreases the amount of light entering the retinulas. May also function as a neurotransmitter and/or neuromodulator. The sequence is that of Pigment-dispersing hormone type 2 (PDH2) from Penaeus vannamei (Whiteleg shrimp).